The chain runs to 142 residues: Nucleoside diphosphate kinase (142 aa).

Residues Lys9, Phe57, Arg85, Thr91, Arg102, and Asn112 each coordinate ATP. His115 serves as the catalytic Pros-phosphohistidine intermediate.

This sequence belongs to the NDK family. Homotetramer. It depends on Mg(2+) as a cofactor.

It localises to the cytoplasm. The catalysed reaction is a 2'-deoxyribonucleoside 5'-diphosphate + ATP = a 2'-deoxyribonucleoside 5'-triphosphate + ADP. It catalyses the reaction a ribonucleoside 5'-diphosphate + ATP = a ribonucleoside 5'-triphosphate + ADP. In terms of biological role, major role in the synthesis of nucleoside triphosphates other than ATP. The ATP gamma phosphate is transferred to the NDP beta phosphate via a ping-pong mechanism, using a phosphorylated active-site intermediate. The chain is Nucleoside diphosphate kinase from Dehalococcoides mccartyi (strain CBDB1).